Reading from the N-terminus, the 347-residue chain is MAVAPNGRRLLRIEARNAQTPIEAKPRWIRTTATMGPEFRDMKKRVKGAGLHTVCQEAGCPNIHECWEDREATFLIGGDTCSRRCDFCDIKSGRPEPLDEDEPRRVAENVREIGLRYSTITGVTRDDLPDEGAWLYAEVVRQIHKLNPNTGVENLTPDFSGKPDLLQTVFEARPEVFAHNLETVPRIFKRIRPAFRYERSLDVIRQARDFGLVTKSNLILGMGETVDEVKSAMRDLRDAGCDILTVTQYLRPSNLHHPIERWVKPEEFVMYRDYGHDIGFAGVMAGPLVRSSYRAGRLYAQAIKARGEELPANLQHLGEGIDDTASQEASTLLSKYGASRETPVGAR.

Residues Cys-55, Cys-60, Cys-66, Cys-81, Cys-85, Cys-88, and Ser-292 each coordinate [4Fe-4S] cluster. Positions 67–281 (WEDREATFLI…RDYGHDIGFA (215 aa)) constitute a Radical SAM core domain.

Belongs to the radical SAM superfamily. Lipoyl synthase family. It depends on [4Fe-4S] cluster as a cofactor.

The protein localises to the cytoplasm. It catalyses the reaction [[Fe-S] cluster scaffold protein carrying a second [4Fe-4S](2+) cluster] + N(6)-octanoyl-L-lysyl-[protein] + 2 oxidized [2Fe-2S]-[ferredoxin] + 2 S-adenosyl-L-methionine + 4 H(+) = [[Fe-S] cluster scaffold protein] + N(6)-[(R)-dihydrolipoyl]-L-lysyl-[protein] + 4 Fe(3+) + 2 hydrogen sulfide + 2 5'-deoxyadenosine + 2 L-methionine + 2 reduced [2Fe-2S]-[ferredoxin]. Its pathway is protein modification; protein lipoylation via endogenous pathway; protein N(6)-(lipoyl)lysine from octanoyl-[acyl-carrier-protein]: step 2/2. Catalyzes the radical-mediated insertion of two sulfur atoms into the C-6 and C-8 positions of the octanoyl moiety bound to the lipoyl domains of lipoate-dependent enzymes, thereby converting the octanoylated domains into lipoylated derivatives. The chain is Lipoyl synthase from Corynebacterium kroppenstedtii (strain DSM 44385 / JCM 11950 / CIP 105744 / CCUG 35717).